A 974-amino-acid chain; its full sequence is Ephrin type-B receptor 3 (974 aa).

The signal sequence occupies residues 1-16 (MLPAVFVILALSAVQG). At 17-534 (LEETLMDTKW…RSSLQEQVPM (518 aa)) the chain is on the extracellular side. In terms of domain architecture, Eph LBD spans 18–196 (EETLMDTKWT…FFKKCPRTTA (179 aa)). C60 and C178 are disulfide-bonded. 2 consecutive Fibronectin type-III domains span residues 318 to 426 (VPSA…TNQA) and 427 to 522 (APSS…IAED). N-linked (GlcNAc...) asparagine glycans are attached at residues N330 and N420. Residues 535-555 (VVGSVTAGLIFIIAVVIIVIV) traverse the membrane as a helical segment. At 556–974 (CFSRKQRNDS…QMSQTLPVQV (419 aa)) the chain is on the cytoplasmic side. At Y590 the chain carries Phosphotyrosine; by autocatalysis. One can recognise a Protein kinase domain in the interval 609 to 872 (VKIEEVIGAG…QIVSSLDKLI (264 aa)). ATP-binding positions include 615-623 (IGAGEFGEV) and K641. D734 acts as the Proton acceptor in catalysis. An SAM domain is found at 901–965 (TTFPTVSDWL…LNSVQDMRLQ (65 aa)). A PDZ-binding motif is present at residues 972 to 974 (VQV).

It belongs to the protein kinase superfamily. Tyr protein kinase family. Ephrin receptor subfamily. As to quaternary structure, heterotetramer upon binding of the ligand. The heterotetramer is composed of an ephrin dimer and a receptor dimer. Oligomerization is probably required to induce biological responses. In terms of processing, phosphorylated. Autophosphorylates upon ligand-binding. Autophosphorylation on Tyr-590 is required for interaction with SH2 domain-containing proteins. In terms of tissue distribution, expressed in the embryo in pre-somitic mesoderm, caudal somites, midbrain, and cement gland. Most abundant in adult brain, eye, heart, lung and ovary. Lower levels in intestine, kidney, oviduct and pharynx.

The protein resides in the cell membrane. It is found in the cell projection. The protein localises to the dendrite. The enzyme catalyses L-tyrosyl-[protein] + ATP = O-phospho-L-tyrosyl-[protein] + ADP + H(+). Its function is as follows. Receptor tyrosine kinase which binds promiscuously transmembrane ephrin-B family ligands residing on adjacent cells, leading to contact-dependent bidirectional signaling into neighboring cells. The signaling pathway downstream of the receptor is referred to as forward signaling while the signaling pathway downstream of the ephrin ligand is referred to as reverse signaling. Generally has an overlapping and redundant function with EPHB2. Like EPHB2, functions in axon guidance during development. In addition to its role in axon guidance also plays an important redundant role with other ephrin-B receptors in development and maturation of dendritic spines and the formation of excitatory synapses. May control other aspects of development through regulation of cell migration and positioning. The sequence is that of Ephrin type-B receptor 3 (ephb3) from Xenopus laevis (African clawed frog).